A 412-amino-acid polypeptide reads, in one-letter code: Multifunctional CCA protein (412 aa).

Residues glycine 8 and arginine 11 each coordinate ATP. Glycine 8 and arginine 11 together coordinate CTP. Positions 21 and 23 each coordinate Mg(2+). Residues arginine 91, arginine 137, and arginine 140 each contribute to the ATP site. Arginine 91, arginine 137, and arginine 140 together coordinate CTP. Residues 228–329 form the HD domain; sequence TGIHTLMTLS…VKLFDSIDAW (102 aa).

It belongs to the tRNA nucleotidyltransferase/poly(A) polymerase family. Bacterial CCA-adding enzyme type 1 subfamily. In terms of assembly, monomer. Can also form homodimers and oligomers. Requires Mg(2+) as cofactor. Ni(2+) serves as cofactor.

It catalyses the reaction a tRNA precursor + 2 CTP + ATP = a tRNA with a 3' CCA end + 3 diphosphate. The catalysed reaction is a tRNA with a 3' CCA end + 2 CTP + ATP = a tRNA with a 3' CCACCA end + 3 diphosphate. Its function is as follows. Catalyzes the addition and repair of the essential 3'-terminal CCA sequence in tRNAs without using a nucleic acid template. Adds these three nucleotides in the order of C, C, and A to the tRNA nucleotide-73, using CTP and ATP as substrates and producing inorganic pyrophosphate. tRNA 3'-terminal CCA addition is required both for tRNA processing and repair. Also involved in tRNA surveillance by mediating tandem CCA addition to generate a CCACCA at the 3' terminus of unstable tRNAs. While stable tRNAs receive only 3'-terminal CCA, unstable tRNAs are marked with CCACCA and rapidly degraded. The polypeptide is Multifunctional CCA protein (Escherichia coli O7:K1 (strain IAI39 / ExPEC)).